The following is a 179-amino-acid chain: Large ribosomal subunit protein uL5 (179 aa).

Belongs to the universal ribosomal protein uL5 family. As to quaternary structure, part of the 50S ribosomal subunit; part of the 5S rRNA/L5/L18/L25 subcomplex. Contacts the 5S rRNA and the P site tRNA. Forms a bridge to the 30S subunit in the 70S ribosome.

In terms of biological role, this is one of the proteins that bind and probably mediate the attachment of the 5S RNA into the large ribosomal subunit, where it forms part of the central protuberance. In the 70S ribosome it contacts protein S13 of the 30S subunit (bridge B1b), connecting the 2 subunits; this bridge is implicated in subunit movement. Contacts the P site tRNA; the 5S rRNA and some of its associated proteins might help stabilize positioning of ribosome-bound tRNAs. The chain is Large ribosomal subunit protein uL5 from Francisella tularensis subsp. tularensis (strain SCHU S4 / Schu 4).